The primary structure comprises 92 residues: Small nuclear ribonucleoprotein E (92 aa).

One can recognise a Sm domain in the interval 18–92 (INLIFRYLQN…NITLLQSVSN (75 aa)).

The protein belongs to the snRNP Sm proteins family. Core component of the spliceosomal U1, U2, U4 and U5 small nuclear ribonucleoproteins (snRNPs), the building blocks of the spliceosome. Most spliceosomal snRNPs contain a common set of Sm proteins, SNRPB, SNRPD1, SNRPD2, SNRPD3, SNRPE, SNRPF and SNRPG that assemble in a heptameric protein ring on the Sm site of the small nuclear RNA to form the core snRNP. Component of the U1 snRNP. The U1 snRNP is composed of the U1 snRNA and the 7 core Sm proteins SNRPB, SNRPD1, SNRPD2, SNRPD3, SNRPE, SNRPF and SNRPG, and at least three U1 snRNP-specific proteins SNRNP70/U1-70K, SNRPA/U1-A and SNRPC/U1-C. Component of the U4/U6-U5 tri-snRNP complex composed of the U4, U6 and U5 snRNAs and at least PRPF3, PRPF4, PRPF6, PRPF8, PRPF31, SNRNP200, TXNL4A, SNRNP40, SNRPB, SNRPD1, SNRPD2, SNRPD3, SNRPE, SNRPF, SNRPG, DDX23, CD2BP2, PPIH, SNU13, EFTUD2, SART1 and USP39, plus LSM2, LSM3, LSM4, LSM5, LSM6, LSM7 and LSM8. Component of the U7 snRNP complex, or U7 Sm protein core complex, that is composed of the U7 snRNA and at least LSM10, LSM11, SNRPB, SNRPD3, SNRPE, SNRPF and SNRPG; the complex does not contain SNRPD1 and SNRPD2. Component of the minor spliceosome, which splices U12-type introns. Part of the SMN-Sm complex that contains SMN1, GEMIN2/SIP1, DDX20/GEMIN3, GEMIN4, GEMIN5, GEMIN6, GEMIN7, GEMIN8, STRAP/UNRIP and the Sm proteins SNRPB, SNRPD1, SNRPD2, SNRPD3, SNRPE, SNRPF and SNRPG; catalyzes core snRNPs assembly. Forms a 6S pICln-Sm complex composed of CLNS1A/pICln, SNRPD1, SNRPD2, SNRPE, SNRPF and SNRPG; ring-like structure where CLNS1A/pICln mimics additional Sm proteins and which is unable to assemble into the core snRNP. Interacts with SMN1; the interaction is direct. Interacts with GEMIN2 (via N-terminus); the interaction is direct. Interacts with SNRPF; the interaction is direct. Interacts with SNRPG; the interaction is direct.

The protein localises to the cytoplasm. The protein resides in the cytosol. Its subcellular location is the nucleus. In terms of biological role, plays a role in pre-mRNA splicing as a core component of the spliceosomal U1, U2, U4 and U5 small nuclear ribonucleoproteins (snRNPs), the building blocks of the spliceosome. Component of both the pre-catalytic spliceosome B complex and activated spliceosome C complexes. As a component of the minor spliceosome, involved in the splicing of U12-type introns in pre-mRNAs. As part of the U7 snRNP it is involved in histone 3'-end processing. In Bos taurus (Bovine), this protein is Small nuclear ribonucleoprotein E (SNRPE).